Consider the following 536-residue polypeptide: Chlorophyllide a oxygenase, chloroplastic (536 aa).

The transit peptide at 1-36 (MNAAVFSPSALSLPISFSKTRSSFLSRKKGVKGEFR) directs the protein to the chloroplast. Residues 123–150 (IGTVKKELAGLQEELSKAHQQVHISEAR) adopt a coiled-coil conformation. One can recognise a Rieske domain in the interval 221 to 321 (WYPVAFTADL…CLEQEGMIWI (101 aa)). Cysteine 262, histidine 264, cysteine 281, and histidine 284 together coordinate [2Fe-2S] cluster. Aspartate 360, aspartate 364, histidine 367, and histidine 372 together coordinate Fe cation.

Its subcellular location is the plastid. It is found in the chloroplast membrane. The protein localises to the chloroplast thylakoid membrane. The catalysed reaction is chlorophyllide a + 2 NADPH + 2 O2 + 2 H(+) = chlorophyllide b + 2 NADP(+) + 3 H2O. The protein operates within porphyrin-containing compound metabolism; chlorophyll biosynthesis. In terms of biological role, catalyzes a two-step oxygenase reaction involved in the synthesis of chlorophyll b. Acts specifically on the non-esterified chlorophyllide a and not on chlorophyll a. This is Chlorophyllide a oxygenase, chloroplastic (CAO) from Arabidopsis thaliana (Mouse-ear cress).